Reading from the N-terminus, the 509-residue chain is Lysine--tRNA ligase (509 aa).

Residues glutamate 418 and glutamate 425 each coordinate Mg(2+).

It belongs to the class-II aminoacyl-tRNA synthetase family. In terms of assembly, homodimer. It depends on Mg(2+) as a cofactor.

It localises to the cytoplasm. The catalysed reaction is tRNA(Lys) + L-lysine + ATP = L-lysyl-tRNA(Lys) + AMP + diphosphate. The chain is Lysine--tRNA ligase from Acinetobacter baumannii (strain AB307-0294).